Here is a 262-residue protein sequence, read N- to C-terminus: Acyl-[acyl-carrier-protein]--UDP-N-acetylglucosamine O-acyltransferase (262 aa).

Belongs to the transferase hexapeptide repeat family. LpxA subfamily. In terms of assembly, homotrimer.

The protein resides in the cytoplasm. The enzyme catalyses a (3R)-hydroxyacyl-[ACP] + UDP-N-acetyl-alpha-D-glucosamine = a UDP-3-O-[(3R)-3-hydroxyacyl]-N-acetyl-alpha-D-glucosamine + holo-[ACP]. It participates in glycolipid biosynthesis; lipid IV(A) biosynthesis; lipid IV(A) from (3R)-3-hydroxytetradecanoyl-[acyl-carrier-protein] and UDP-N-acetyl-alpha-D-glucosamine: step 1/6. Its function is as follows. Involved in the biosynthesis of lipid A, a phosphorylated glycolipid that anchors the lipopolysaccharide to the outer membrane of the cell. This is Acyl-[acyl-carrier-protein]--UDP-N-acetylglucosamine O-acyltransferase from Histophilus somni (strain 2336) (Haemophilus somnus).